A 122-amino-acid polypeptide reads, in one-letter code: Large ribosomal subunit protein uL14 (122 aa).

The protein belongs to the universal ribosomal protein uL14 family. In terms of assembly, part of the 50S ribosomal subunit. Forms a cluster with proteins L3 and L19. In the 70S ribosome, L14 and L19 interact and together make contacts with the 16S rRNA in bridges B5 and B8.

In terms of biological role, binds to 23S rRNA. Forms part of two intersubunit bridges in the 70S ribosome. This is Large ribosomal subunit protein uL14 from Marinomonas sp. (strain MWYL1).